We begin with the raw amino-acid sequence, 297 residues long: Bifunctional protein FolD (297 aa).

NADP(+) is bound by residues 164–166 (GRS), serine 193, and valine 234.

It belongs to the tetrahydrofolate dehydrogenase/cyclohydrolase family. As to quaternary structure, homodimer.

It carries out the reaction (6R)-5,10-methylene-5,6,7,8-tetrahydrofolate + NADP(+) = (6R)-5,10-methenyltetrahydrofolate + NADPH. The catalysed reaction is (6R)-5,10-methenyltetrahydrofolate + H2O = (6R)-10-formyltetrahydrofolate + H(+). The protein operates within one-carbon metabolism; tetrahydrofolate interconversion. Functionally, catalyzes the oxidation of 5,10-methylenetetrahydrofolate to 5,10-methenyltetrahydrofolate and then the hydrolysis of 5,10-methenyltetrahydrofolate to 10-formyltetrahydrofolate. The polypeptide is Bifunctional protein FolD (Natronomonas pharaonis (strain ATCC 35678 / DSM 2160 / CIP 103997 / JCM 8858 / NBRC 14720 / NCIMB 2260 / Gabara) (Halobacterium pharaonis)).